Reading from the N-terminus, the 244-residue chain is DNA repair protein RecO (244 aa).

This sequence belongs to the RecO family.

Its function is as follows. Involved in DNA repair and RecF pathway recombination. The sequence is that of DNA repair protein RecO from Jannaschia sp. (strain CCS1).